The primary structure comprises 743 residues: MTILSADTLSITRPYSNSLSTLKVIATPVTESPPSPVASSISPNATNLVEEFINAHKELQSYKSGRPVVLDGHTLSIAAVAAAARYDAGVELDDSPLVKDRLLQSRQVVADKVEQGTSIYGVTTGFGGSADTRTDQPILLGNALMQMQHSGILPSSSKPLDALPLQDPFGLAMPESWVRGAMLIRMNSLIRGHSGVRWELIEKMNDLLRANITPVVPLRGSISASGDLQPLSYVAGALYGNPSIRVFDGERTSALGPRKIVSSVEALEAHSISPISLACKEHLGILNGTAFSASVAALALHDAVHLTLLTQVLTAMGAEALAGTRGNFDPFIHAVARPHPGQIETADVIWNLLEGSKFATTEEEEMTIDEDKGHLRQDRYPLRTSPQFIGPQVEDLIASLATITLECNSTTDNPLVDGETGKVHNGGNFQAMAVTNAMEKTRLSLHHLGKLVFSQCAELINPTMNRGLPPSLAATDPSLNYHAKGIDIASAAYVAELGYLANPVSTHIQSAEMHNQAINSMALVSGRATITSLEVLSLLISSYLYAICQALDLRALQHELYEGLDAIVKEEIIAAFSPFLDDYEITRFTAISCHIVRDAMDSTSTMDAKDRMTSVAASLTTPLVDFLTGEAFSDVVSAGQALTTIPAFRARIAARGYELLDELRRAYLSGGRGLAPASRFLNKTRPVYEFVRLTLGIKMHGAENYNDFENGVGVDDVTTGQNVSLIHEAIRDGKLQPIIVDLF.

Residue Y120 is the Proton donor/acceptor of the active site. Residues 224–226 constitute a cross-link (5-imidazolinone (Ala-Gly)); it reads ASG. At S225 the chain carries 2,3-didehydroalanine (Ser). Residues N287, Q377, R383, N413, K484, E512, and N515 each coordinate (E)-cinnamate.

This sequence belongs to the PAL/histidase family. As to quaternary structure, homotetramer. Contains an active site 4-methylidene-imidazol-5-one (MIO), which is formed autocatalytically by cyclization and dehydration of residues Ala-Ser-Gly.

Its subcellular location is the cytoplasm. The enzyme catalyses L-phenylalanine = (E)-cinnamate + NH4(+). The protein operates within phenylpropanoid metabolism; trans-cinnamate biosynthesis; trans-cinnamate from L-phenylalanine: step 1/1. In terms of biological role, catalyzes the non-oxidative deamination of L-phenylalanine to form trans-cinnamic acid and a free ammonium ion. Facilitates the commitment step in phenylpropanoid pathways that produce secondary metabolites such as lignins, coumarins and flavonoids. The protein is Phenylalanine ammonia-lyase 1 of Pleurotus ostreatus (Oyster mushroom).